Here is an 89-residue protein sequence, read N- to C-terminus: DNA-directed RNA polymerase subunit Rpo6 (89 aa).

This sequence belongs to the archaeal Rpo6/eukaryotic RPB6 RNA polymerase subunit family. Part of the 13-subunit RNA polymerase complex.

Its subcellular location is the cytoplasm. It catalyses the reaction RNA(n) + a ribonucleoside 5'-triphosphate = RNA(n+1) + diphosphate. In terms of biological role, DNA-dependent RNA polymerase (RNAP) catalyzes the transcription of DNA into RNA using the four ribonucleoside triphosphates as substrates. Reconstitution experiments show this subunit is required for basic activity. This Sulfolobus acidocaldarius (strain ATCC 33909 / DSM 639 / JCM 8929 / NBRC 15157 / NCIMB 11770) protein is DNA-directed RNA polymerase subunit Rpo6.